A 308-amino-acid chain; its full sequence is Oxygen-dependent coproporphyrinogen-III oxidase (308 aa).

Serine 100 is a substrate binding site. 2 residues coordinate a divalent metal cation: histidine 104 and histidine 114. Histidine 114 acts as the Proton donor in catalysis. A substrate-binding site is contributed by 116 to 118 (NFR). Positions 153 and 183 each coordinate a divalent metal cation. Residues 248–283 (YVEFNLVFDRGTIFGLQSGGRTESILSSMPPMATWK) are important for dimerization. A substrate-binding site is contributed by 266–268 (GGR).

It belongs to the aerobic coproporphyrinogen-III oxidase family. Homodimer. The cofactor is a divalent metal cation.

The protein resides in the cytoplasm. It carries out the reaction coproporphyrinogen III + O2 + 2 H(+) = protoporphyrinogen IX + 2 CO2 + 2 H2O. It functions in the pathway porphyrin-containing compound metabolism; protoporphyrin-IX biosynthesis; protoporphyrinogen-IX from coproporphyrinogen-III (O2 route): step 1/1. In terms of biological role, involved in the heme biosynthesis. Catalyzes the aerobic oxidative decarboxylation of propionate groups of rings A and B of coproporphyrinogen-III to yield the vinyl groups in protoporphyrinogen-IX. The polypeptide is Oxygen-dependent coproporphyrinogen-III oxidase (Francisella tularensis subsp. mediasiatica (strain FSC147)).